The sequence spans 1017 residues: Probable disease resistance protein RDL5 (1017 aa).

Residues 25–52 (QGVEDQVTELKRDLNMLSSFLKDANAKK) are a coiled coil. One can recognise an NB-ARC domain in the interval 147–460 (KQREMRQKFS…AEGIFQPRHY (314 aa)). 190-197 (GMGGLGKT) is a binding site for ATP. LRR repeat units follow at residues 602–627 (LIHLRYLSLEYAEVTHIPYSLGNLKL), 649–674 (MQELRYLALPSDMGRKTKLELSNLVK), 675–699 (LETLENFSTENSSLEDLCGMVRLST), 768–791 (PSHLTTLYLESCRLEEDPMPILEK), 792–819 (LLQLKELELGFESFSGKKMVCSSGGFPQ), 841–865 (MPLLRTLDIQVCRKLKQLPDEHLPS), and 937–962 (MPFLHTLYIDDCPKLKKLPDGLQFIY).

This sequence belongs to the disease resistance NB-LRR family.

Its function is as follows. Potential disease resistance protein. In Arabidopsis thaliana (Mouse-ear cress), this protein is Probable disease resistance protein RDL5 (RDL5).